An 833-amino-acid chain; its full sequence is MPLEMDQKISKHTFGCQRSSTSDDDSGCAMEEYTWVPPGLRPEQVQLYFACLPEEKVPYVNSVGEKCRIKQLLYQLPPHDNEVRYCQSLSEEEKKELQMFSAQRKKEALGRGNIKMLSRAVMHAMCEKCGEKINGGEIAIFVSRAGPGVCWHPSCFVCSTCNELLVDLIYFYQDGKIHCGRHHAELLKPRCSACDEIIFADECTEAEGRHWHMNHFSCYECETVLGGQRYIMKDGRPFCCGCFESHYAEYCESCGEHIGVDHAQMTYDGQHWHATETCFSCAQCKVSLLGCPFLPKKGRIYCSKACSLGEDVHASDSSDSAFQSARSRESRRSVRMGKSSRSADQCRQSLLLSPALNYKFPGMSGNADDTLSRKMDDLSISRQGAGFDNDFWKARDEQETPEDHEEWAEHDDYMTQLLLKFGEKGLFQQAPEDNRSNEHWMSDNIKGKNDLQRNSRNQSLASKKYQSDMYWAQSQDGLGDSAYGSHPGPASSRKLQELDMDHGASGYMHEKMPWYKRSLECLSDNLKPQNENICDSMDSLALSNITGASVDRENKPRPSLFSYQNFQDLNTRDCEKMSNMGTLNSSMLNRSTESLKSLNSEICQEKPPPEEKPMHTSALRRSKSQTRPQVKFSDDVIDNGDCGSIDIRQPPMSERSRRRVYNFEERSQRPHHHRRRKSRKSRSENALHLATESKPSGRERNPRFYTAEDYEKLFHNRSAHEVQAYIQNADLFGQYPNAASNFGLPSQVVDKFLGLYGEDEDSWCSTCSSSSSDSEEEGYFLGQPIPKPLPQRYQYFSDDLCSPTNALSSSQFSQRTTKSKKKKGHKGKNCIIS.

The tract at residues M1–S22 is disordered. Residues F14 to M122 form the PET domain. 3 consecutive LIM zinc-binding domains span residues A124–K188, P189–E249, and Y250–H313. Disordered regions lie at residues V312–C346, E432–R456, C603–P702, C767–P786, and N805–S833. Basic and acidic residues-rich tracts occupy residues E432 to R453 and C603 to M614. Basic residues predominate over residues R669–K680. Basic residues predominate over residues T817–S833. C830 bears the Cysteine methyl ester mark. Residue C830 is the site of S-farnesyl cysteine attachment. The propeptide at I831 to S833 is removed in mature form.

Belongs to the prickle / espinas / testin family. As to quaternary structure, interacts with dvl2/dsh and mapk8/jnk1.

It localises to the cell membrane. In terms of biological role, acts in a planar cell polarity (PCP) complex; polarization along the apical/basal axis of epithelial cells. Regulates the polarized assembly of fibronectrin on the surface of the mesoderm during gastrulation. Essential for gastrulation cell movements, cooperating with dvl2/dsh to activate jnk. Acts together with tes to control axial elongation. The protein is Prickle-like protein 1 of Xenopus tropicalis (Western clawed frog).